A 157-amino-acid polypeptide reads, in one-letter code: ATP synthase subunit b (157 aa).

A helical transmembrane segment spans residues 7–29; the sequence is MFGQLIMFTMFTWFCMKFVWPPI.

Belongs to the ATPase B chain family. As to quaternary structure, F-type ATPases have 2 components, F(1) - the catalytic core - and F(0) - the membrane proton channel. F(1) has five subunits: alpha(3), beta(3), gamma(1), delta(1), epsilon(1). F(0) has three main subunits: a(1), b(2) and c(10-14). The alpha and beta chains form an alternating ring which encloses part of the gamma chain. F(1) is attached to F(0) by a central stalk formed by the gamma and epsilon chains, while a peripheral stalk is formed by the delta and b chains.

It is found in the cell inner membrane. Functionally, f(1)F(0) ATP synthase produces ATP from ADP in the presence of a proton or sodium gradient. F-type ATPases consist of two structural domains, F(1) containing the extramembraneous catalytic core and F(0) containing the membrane proton channel, linked together by a central stalk and a peripheral stalk. During catalysis, ATP synthesis in the catalytic domain of F(1) is coupled via a rotary mechanism of the central stalk subunits to proton translocation. Component of the F(0) channel, it forms part of the peripheral stalk, linking F(1) to F(0). In Ruthia magnifica subsp. Calyptogena magnifica, this protein is ATP synthase subunit b.